A 715-amino-acid polypeptide reads, in one-letter code: uncharacterized protein (715 aa).

This is an uncharacterized protein from Mycobacterium tuberculosis (strain CDC 1551 / Oshkosh).